A 275-amino-acid chain; its full sequence is Tryptophan synthase alpha chain (275 aa).

Residue glutamate 51 is the Proton acceptor of the active site.

It belongs to the TrpA family. As to quaternary structure, tetramer of two alpha and two beta chains.

It carries out the reaction (1S,2R)-1-C-(indol-3-yl)glycerol 3-phosphate + L-serine = D-glyceraldehyde 3-phosphate + L-tryptophan + H2O. It functions in the pathway amino-acid biosynthesis; L-tryptophan biosynthesis; L-tryptophan from chorismate: step 5/5. The alpha subunit is responsible for the aldol cleavage of indoleglycerol phosphate to indole and glyceraldehyde 3-phosphate. This is Tryptophan synthase alpha chain from Caulobacter vibrioides (strain ATCC 19089 / CIP 103742 / CB 15) (Caulobacter crescentus).